The sequence spans 258 residues: Fibroblast growth factor-binding protein 3 (258 aa).

The signal sequence occupies residues methionine 1 to alanine 26. Cystine bridges form between cysteine 59/cysteine 80 and cysteine 90/cysteine 124. A disordered region spans residues arginine 146–aspartate 231. The segment covering glycine 186–glutamate 197 has biased composition (pro residues). Residues asparagine 198–arginine 209 show a composition bias toward basic and acidic residues. Cysteine 241 and cysteine 249 are disulfide-bonded.

This sequence belongs to the fibroblast growth factor-binding protein family. In terms of assembly, interacts with FGF2.

Its subcellular location is the secreted. Its function is as follows. Heparin-binding protein which binds to FGF2, prevents binding of FGF2 to heparin and probably inhibits immobilization of FGF2 on extracellular matrix glycosaminoglycans, allowing its release and subsequent activation of FGFR signaling which leads to increased vascular permeability. The sequence is that of Fibroblast growth factor-binding protein 3 (FGFBP3) from Homo sapiens (Human).